The sequence spans 223 residues: Neurotrophic factor BDNF precursor form (223 aa).

An N-terminal signal peptide occupies residues 1–5 (SCMKA). The propeptide occupies 6 to 114 (APMKEVSIRG…AANMSMRVRR (109 aa)). A glycan (N-linked (GlcNAc...) asparagine) is linked at Asn-107. Intrachain disulfides connect Cys-127/Cys-194 and Cys-172/Cys-223.

Belongs to the NGF-beta family.

It is found in the secreted. In terms of biological role, promotes the survival of neuronal populations that are all located either in the central nervous system or directly connected to it. In Boa constrictor (Boa), this protein is Neurotrophic factor BDNF precursor form (BDNF).